The following is a 286-amino-acid chain: GTP cyclohydrolase 1 type 2 homolog (286 aa).

Residues His-66, His-67, Asp-103, His-254, and Glu-258 each coordinate a divalent metal cation.

It belongs to the GTP cyclohydrolase I type 2/NIF3 family. As to quaternary structure, homohexamer.

In Treponema pallidum (strain Nichols), this protein is GTP cyclohydrolase 1 type 2 homolog.